A 501-amino-acid chain; its full sequence is GDP-fucose protein O-fucosyltransferase 4 (501 aa).

Topologically, residues 1–10 (MLLQMAGRGK) are cytoplasmic. A helical; Signal-anchor for type II membrane protein membrane pass occupies residues 11–31 (MVPCVCLGLLGVLCWVWVSFA). The Lumenal segment spans residues 32-501 (SFPDEQLSLG…MAVRRARGKN (470 aa)). Residue Asn-173 is glycosylated (N-linked (GlcNAc...) asparagine). Cys-396 and Cys-399 are oxidised to a cystine. N-linked (GlcNAc...) asparagine glycans are attached at residues Asn-428 and Asn-478.

It belongs to the glycosyltransferase 10 family.

The protein resides in the endoplasmic reticulum membrane. The catalysed reaction is L-threonyl-[protein] + GDP-beta-L-fucose = 3-O-(alpha-L-fucosyl)-L-threonyl-[protein] + GDP + H(+). The enzyme catalyses L-seryl-[protein] + GDP-beta-L-fucose = 3-O-(alpha-L-fucosyl)-L-seryl-[protein] + GDP + H(+). The protein operates within protein modification; protein glycosylation. Functionally, protein O-fucosyltransferase that specifically catalyzes O-fucosylation of serine or threonine residues in EMI domains of target proteins. Attaches fucose through an O-glycosidic linkage. O-fucosylation of EMI domain-containing proteins may be required for facilitating protein folding and secretion. This chain is GDP-fucose protein O-fucosyltransferase 4 (fut11), found in Takifugu rubripes (Japanese pufferfish).